The following is a 548-amino-acid chain: ATP synthase subunit alpha (548 aa).

172–179 (GDRKTGKT) contributes to the ATP binding site. Residues 511–548 (FETTSGESVVPDENVEAMSEDDVEKESVKVRKPAPKKK) form a disordered region. Acidic residues predominate over residues 523-534 (ENVEAMSEDDVE).

The protein belongs to the ATPase alpha/beta chains family. As to quaternary structure, F-type ATPases have 2 components, CF(1) - the catalytic core - and CF(0) - the membrane proton channel. CF(1) has five subunits: alpha(3), beta(3), gamma(1), delta(1), epsilon(1). CF(0) has three main subunits: a(1), b(2) and c(9-12). The alpha and beta chains form an alternating ring which encloses part of the gamma chain. CF(1) is attached to CF(0) by a central stalk formed by the gamma and epsilon chains, while a peripheral stalk is formed by the delta and b chains.

The protein resides in the cell membrane. It catalyses the reaction ATP + H2O + 4 H(+)(in) = ADP + phosphate + 5 H(+)(out). Produces ATP from ADP in the presence of a proton gradient across the membrane. The alpha chain is a regulatory subunit. The sequence is that of ATP synthase subunit alpha from Mycobacterium sp. (strain JLS).